Consider the following 209-residue polypeptide: Large ribosomal subunit protein uL4 (209 aa).

A disordered region spans residues 45-80 (RQGTHKAKERSELSGSTRKLIRQKGSGGARRGDINS).

Belongs to the universal ribosomal protein uL4 family. In terms of assembly, part of the 50S ribosomal subunit.

Functionally, one of the primary rRNA binding proteins, this protein initially binds near the 5'-end of the 23S rRNA. It is important during the early stages of 50S assembly. It makes multiple contacts with different domains of the 23S rRNA in the assembled 50S subunit and ribosome. Its function is as follows. Forms part of the polypeptide exit tunnel. In Porphyromonas gingivalis (strain ATCC BAA-308 / W83), this protein is Large ribosomal subunit protein uL4.